A 203-amino-acid chain; its full sequence is A-type ATP synthase subunit E (203 aa).

This sequence belongs to the V-ATPase E subunit family. Has multiple subunits with at least A(3), B(3), C, D, E, F, H, I and proteolipid K(x).

Its subcellular location is the cell membrane. Its function is as follows. Component of the A-type ATP synthase that produces ATP from ADP in the presence of a proton gradient across the membrane. In Thermococcus sibiricus (strain DSM 12597 / MM 739), this protein is A-type ATP synthase subunit E.